The chain runs to 426 residues: Endoglucanase (426 aa).

Residues 1 to 19 (MRRCMPLVAASVAALMLAG) form the signal peptide. Cys20 is lipidated: N-palmitoyl cysteine. Cys20 carries S-diacylglycerol cysteine lipidation. Residues 20 to 45 (CGGGDGDPSLSTASVSATDTTTLKPA) constitute a propeptide that is removed on maturation. The active-site Proton donor is Glu249. Catalysis depends on Glu361, which acts as the Nucleophile.

This sequence belongs to the glycosyl hydrolase 5 (cellulase A) family.

Its subcellular location is the cell membrane. It carries out the reaction Endohydrolysis of (1-&gt;4)-beta-D-glucosidic linkages in cellulose, lichenin and cereal beta-D-glucans.. The chain is Endoglucanase (egl) from Ralstonia solanacearum (Pseudomonas solanacearum).